A 168-amino-acid polypeptide reads, in one-letter code: Phosphopantetheine adenylyltransferase (168 aa).

T14 is a binding site for substrate. Residues 14–15 and H22 each bind ATP; that span reads TF. Positions 46, 78, and 92 each coordinate substrate. ATP-binding positions include 93-95, E103, and 128-134; these read GLR and YSFISSS.

It belongs to the bacterial CoaD family. In terms of assembly, homohexamer. Requires Mg(2+) as cofactor.

The protein resides in the cytoplasm. It carries out the reaction (R)-4'-phosphopantetheine + ATP + H(+) = 3'-dephospho-CoA + diphosphate. It functions in the pathway cofactor biosynthesis; coenzyme A biosynthesis; CoA from (R)-pantothenate: step 4/5. Functionally, reversibly transfers an adenylyl group from ATP to 4'-phosphopantetheine, yielding dephospho-CoA (dPCoA) and pyrophosphate. The chain is Phosphopantetheine adenylyltransferase from Xanthomonas campestris pv. campestris (strain 8004).